Here is a 271-residue protein sequence, read N- to C-terminus: Acetylglutamate kinase (271 aa).

Substrate-binding positions include 41 to 42 (GG), Arg-63, and Asn-166.

The protein belongs to the acetylglutamate kinase family. ArgB subfamily.

Its subcellular location is the cytoplasm. The catalysed reaction is N-acetyl-L-glutamate + ATP = N-acetyl-L-glutamyl 5-phosphate + ADP. It participates in amino-acid biosynthesis; L-arginine biosynthesis; N(2)-acetyl-L-ornithine from L-glutamate: step 2/4. In terms of biological role, catalyzes the ATP-dependent phosphorylation of N-acetyl-L-glutamate. The polypeptide is Acetylglutamate kinase (Anaeromyxobacter sp. (strain Fw109-5)).